The sequence spans 788 residues: Protein translocase subunit SecA 2 (788 aa).

ATP contacts are provided by residues Q86, 104–108, and D493; that span reads GEGKT.

This sequence belongs to the SecA family. As to quaternary structure, monomer and homodimer. Part of the essential Sec protein translocation apparatus which comprises SecA, SecYEG and auxiliary proteins SecDF. Other proteins may also be involved.

The protein resides in the cell membrane. Its subcellular location is the cytoplasm. It carries out the reaction ATP + H2O + cellular proteinSide 1 = ADP + phosphate + cellular proteinSide 2.. In terms of biological role, part of the Sec protein translocase complex. Interacts with the SecYEG preprotein conducting channel. Has a central role in coupling the hydrolysis of ATP to the transfer of proteins into and across the cell membrane, serving as an ATP-driven molecular motor driving the stepwise translocation of polypeptide chains across the membrane. In Geobacillus thermodenitrificans (strain NG80-2), this protein is Protein translocase subunit SecA 2.